The sequence spans 348 residues: MKLKKIIPAFPLLSTVAVGLWLTPTQASADAADTMVDISGKKVLVGYWHNWASKGRDGYKQGTSASLNLSEVNQAYNVVPVSFMKSDGTTRIPTFKPYNQTDTAFRQEVAQLNSQGRAVLLALGGADAHIQLVKGDEQAFANEIIRQVETYGFDGLDIDLEQLAITAGDNQTVIPATLKIVKDHYRAQGKNFIITMAPEFPYLKPGAAYETYITSLNGYYDYIAPQLYNQGGDGVWVDEIMTWVAQSNDALKYEFLYYMSDSLIHGTRGYLQIPNDKLVLGLPANRDAAGSGYVVEATPVAKTFDQLAKDGNPIRGLMTWSANWDVGQDVNGKSYNNEFATRYSNLVK.

The first 29 residues, 1-29 (MKLKKIIPAFPLLSTVAVGLWLTPTQASA), serve as a signal peptide directing secretion. The GH18 domain occupies 42–348 (KVLVGYWHNW…FATRYSNLVK (307 aa)). Residue E161 is the Proton donor of the active site.

Belongs to the glycosyl hydrolase 18 family.

The protein resides in the secreted. It catalyses the reaction Random endo-hydrolysis of N-acetyl-beta-D-glucosaminide (1-&gt;4)-beta-linkages in chitin and chitodextrins.. The protein operates within glycan degradation; chitin degradation. Functionally, involved in chitin degradation. Catalyzes the cleavage of glycosidic linkages in chitooligosaccharides and in alpha- and beta-chitin. Its activity on chitooligosaccharides increases considerably with degrees of polymerization (the initial rate of hydrolysis for GlcNAc5 is about 130-fold higher than that for GlcNAc3). Its activity is greatly stimulated in the presence of the lytic chitin monooxygenase EfCBM33A, which attacks the crystalline structure of chitin and makes the polymer more accessible to the chitinase; combining the two enzymes leads to rapid and complete depolymerization of crystalline chitin, especially with beta-chitin as a substrate. Is likely involved in a chitin degradation pathway that allows E.faecalis V583 to grow on chitin as a carbon source. This is Chitinase from Enterococcus faecalis (strain ATCC 700802 / V583).